The chain runs to 287 residues: Toxin zeta (287 aa).

40–47 (GQPGSGKT) is an ATP binding site. A disordered region spans residues 250-287 (MVQNQHQETPEFKAIQQKMESLQPPTPPIPKTPKLPGI). Positions 273–287 (PPTPPIPKTPKLPGI) are enriched in pro residues.

The protein belongs to the zeta toxin family. In terms of assembly, in the presence of the epsilon antitoxin, forms an inactive PezA(2)PezT(2) heterotetramer.

It carries out the reaction UDP-N-acetyl-alpha-D-glucosamine + ATP = UDP-N-acetyl-alpha-D-glucosamine 3'-phosphate + ADP + H(+). Toxic component of a type II toxin-antitoxin (TA) system. Phosphorylates UDP-N-acetyl-D-glucosamine (UNAG) on the 3'-hydroxyl group of the N-acetyl-D-glucosamine moiety, yielding UNAG-3P. UNAG-3P inhibits MurA, the first committed step in cell wall synthesis, which is then blocked. Phosphorylation is inhibited by cognate epsilon antitoxin. Part of a postsegregational killing (PSK) system involved in the killing of plasmid-free cells. The zeta toxin induces programmed cell death. The chain is Toxin zeta from Streptococcus agalactiae.